An 880-amino-acid polypeptide reads, in one-letter code: Alanine--tRNA ligase (880 aa).

Zn(2+) is bound by residues H558, H562, C663, and H667.

It belongs to the class-II aminoacyl-tRNA synthetase family. Requires Zn(2+) as cofactor.

It localises to the cytoplasm. It carries out the reaction tRNA(Ala) + L-alanine + ATP = L-alanyl-tRNA(Ala) + AMP + diphosphate. Functionally, catalyzes the attachment of alanine to tRNA(Ala) in a two-step reaction: alanine is first activated by ATP to form Ala-AMP and then transferred to the acceptor end of tRNA(Ala). Also edits incorrectly charged Ser-tRNA(Ala) and Gly-tRNA(Ala) via its editing domain. The polypeptide is Alanine--tRNA ligase (Mycoplasmopsis agalactiae (strain NCTC 10123 / CIP 59.7 / PG2) (Mycoplasma agalactiae)).